The sequence spans 241 residues: Proteasome subunit beta type-1 (241 aa).

N-acetylmethionine is present on methionine 1. A propeptide spanning residues 1–28 (MLSSVAAYSGAGRDLAMEPHSSVGPLQL) is cleaved from the precursor. Residue serine 58 is glycosylated (O-linked (GlcNAc) serine). 2 positions are modified to phosphoserine: serine 62 and serine 68. Position 150 is a phosphotyrosine (tyrosine 150). The residue at position 162 (serine 162) is a Phosphoserine. At lysine 204 the chain carries N6-acetyllysine. A glycan (O-linked (GlcNAc) serine) is linked at serine 209.

This sequence belongs to the peptidase T1B family. In terms of assembly, the 26S proteasome consists of a 20S proteasome core and two 19S regulatory subunits. The 20S proteasome core is a barrel-shaped complex made of 28 subunits that are arranged in four stacked rings. The two outer rings are each formed by seven alpha subunits, and the two inner rings are formed by seven beta subunits. The proteolytic activity is exerted by three beta-subunits PSMB5, PSMB6 and PSMB7. Interacts with SERPINB2. Interacts with RFPL4A.

It localises to the cytoplasm. The protein resides in the nucleus. Non-catalytic component of the 20S core proteasome complex involved in the proteolytic degradation of most intracellular proteins. This complex plays numerous essential roles within the cell by associating with different regulatory particles. Associated with two 19S regulatory particles, forms the 26S proteasome and thus participates in the ATP-dependent degradation of ubiquitinated proteins. The 26S proteasome plays a key role in the maintenance of protein homeostasis by removing misfolded or damaged proteins that could impair cellular functions, and by removing proteins whose functions are no longer required. Associated with the PA200 or PA28, the 20S proteasome mediates ubiquitin-independent protein degradation. This type of proteolysis is required in several pathways including spermatogenesis (20S-PA200 complex) or generation of a subset of MHC class I-presented antigenic peptides (20S-PA28 complex). The polypeptide is Proteasome subunit beta type-1 (PSMB1) (Bos taurus (Bovine)).